Consider the following 160-residue polypeptide: 2-amino-4-hydroxy-6-hydroxymethyldihydropteridine pyrophosphokinase (160 aa).

Belongs to the HPPK family. As to quaternary structure, monomer.

The catalysed reaction is 6-hydroxymethyl-7,8-dihydropterin + ATP = (7,8-dihydropterin-6-yl)methyl diphosphate + AMP + H(+). It functions in the pathway cofactor biosynthesis; tetrahydrofolate biosynthesis; 2-amino-4-hydroxy-6-hydroxymethyl-7,8-dihydropteridine diphosphate from 7,8-dihydroneopterin triphosphate: step 4/4. Functionally, catalyzes the transfer of pyrophosphate from adenosine triphosphate (ATP) to 6-hydroxymethyl-7,8-dihydropterin, an enzymatic step in folate biosynthesis pathway. The sequence is that of 2-amino-4-hydroxy-6-hydroxymethyldihydropteridine pyrophosphokinase (folK) from Haemophilus influenzae (strain ATCC 51907 / DSM 11121 / KW20 / Rd).